A 134-amino-acid polypeptide reads, in one-letter code: UPF0412 protein YaaI (134 aa).

An N-terminal signal peptide occupies residues 1-23; the sequence is MKSVITISASLAISLMLCCTAQA.

It belongs to the UPF0412 family.

The sequence is that of UPF0412 protein YaaI from Escherichia coli (strain UTI89 / UPEC).